Here is a 530-residue protein sequence, read N- to C-terminus: S-adenosylhomocysteine hydrolase-like protein 1 (530 aa).

At M1 the chain carries N-acetylmethionine. An N-acetylserine modification is found at S2. Position 2 is a phosphoserine (S2). The residue at position 40 (K40) is an N6-acetyllysine. Residues 53–103 (KFPTKTGRRSLSRSISQSSTDSYSSAASYTDSSDDEVSPREKQQTNSKGSS) are disordered. Over residues 64–83 (SRSISQSSTDSYSSAASYTD) the composition is skewed to low complexity. Residues 65 to 92 (RSISQSSTDSYSSAASYTDSSDDEVSPR) form a PEST region. S68, S71, S74, S77, and S84 each carry phosphoserine. Residues 138 to 201 (QGEKPLAGAK…EAGVAVFAWK (64 aa)) form an interaction with BCL2L10 region. Substrate-binding residues include T155, D229, E254, K284, and D288. The tract at residues 281–448 (SVTKQKFDNL…EGRLLNLSCS (168 aa)) is NAD binding. Residues 318–322 (GYGEV), E341, and N376 contribute to the NAD(+) site. Position 391 is a phosphoserine (S391). An NAD(+)-binding site is contributed by 397–399 (MGH). The tract at residues 520 to 530 (NGPFKPNYYRY) is PDZ-binding.

The protein belongs to the adenosylhomocysteinase family. Forms multimers. Forms heteromultimers with AHCYL2 (via the C-terminal region). Interacts (when phosphorylated) with ITPR1 (when not phosphorylated); the interaction suppresses inositol 1,4,5-trisphosphate binding to ITPR1. Interacts with BCL2L10; this strengthens the interaction of AHCYL1 with ITPR1. Interacts with CFTR and SLC26A6; the interactions take place once AHCYL1 is released from ITPR1 and increase CFTR and SLC26A6 activities. Interacts with RRM1; in a phosphorylation- and (dATP)-dependent manner. Interacts (via PEST domain when phosphorylated) with SLC4A4 isoform 1 but not isoform 2; the interaction increases SLC4A4 isoform 1 activity. Interacts (when phosphorylated) with SLC9A3; the interaction is required for SLC9A3 apical location and activity. Interacts (when phosphorylated) with FIP1L1; the interaction is direct and associates AHCYL1 with the CPSF complex and RNA. Interacts with PAPOLA. Interacts with ZCCHC4. Interacts with AHCY. NAD(+) serves as cofactor. In terms of processing, phosphorylated at Ser/Thr residues between Ser-68 and Thr-72 in the PEST region: required for interaction with dATP-bound RRM1 and ITPR1. Phosphorylation at Ser-68 by PRKD1 and CAMK4 is required for further phosphorylations by CSNK1A1. Phosphorylation is induced by oxidative stress. Probably phosphorylated by CAMK2A; phosphorylation at Ser-68 may be required for interaction with SLC9A3. Dephosphorylated in response to apoptotic stress conditions which causes translocation of both AHCYL1 and BCL2L10 from mitochondria-associated endoplasmic reticulum membranes and promotes apoptosis. In terms of tissue distribution, expressed in dendritic cells.

It is found in the endoplasmic reticulum. The protein localises to the cytoplasm. It localises to the cytosol. The protein resides in the apical cell membrane. Its subcellular location is the microsome. In terms of biological role, multifaceted cellular regulator which coordinates several essential cellular functions including regulation of epithelial HCO3(-) and fluid secretion, mRNA processing and DNA replication. Regulates ITPR1 sensitivity to inositol 1,4,5-trisphosphate, competing for the common binding site and acting as endogenous 'pseudoligand' whose inhibitory activity can be modulated by its phosphorylation status. Promotes the formation of contact points between the endoplasmic reticulum (ER) and mitochondria, facilitating transfer of Ca(2+) from the ER to mitochondria. Under normal cellular conditions, functions cooperatively with BCL2L10 to limit ITPR1-mediated Ca(2+) release but, under apoptotic stress conditions, dephosphorylated which promotes dissociation of both AHCYL1 and BCL2L10 from mitochondria-associated endoplasmic reticulum membranes, inhibits BCL2L10 interaction with ITPR1 and leads to increased Ca(2+) transfer to mitochondria which promotes apoptosis. In the pancreatic and salivary ducts, at resting state, attenuates inositol 1,4,5-trisphosphate-induced calcium release by interacting with ITPR1. When extracellular stimuli induce ITPR1 phosphorylation or inositol 1,4,5-trisphosphate production, dissociates from ITPR1 to interact with CFTR and SLC26A6, mediating their synergistic activation by calcium and cAMP that stimulates the epithelial secretion of electrolytes and fluid. Also activates basolateral SLC4A4 isoform 1 to coordinate fluid and HCO3(-) secretion. Inhibits the effect of STK39 on SLC4A4 and CFTR by recruiting PP1 phosphatase which activates SLC4A4, SLC26A6 and CFTR through dephosphorylation. Mediates the induction of SLC9A3 surface expression produced by Angiotensin-2. Depending on the cell type, activates SLC9A3 in response to calcium or reverses SLC9A3R2-dependent calcium inhibition. May modulate the polyadenylation state of specific mRNAs, both by controlling the subcellular location of FIP1L1 and by inhibiting PAPOLA activity, in response to a stimulus that alters its phosphorylation state. Acts as a (dATP)-dependent inhibitor of ribonucleotide reductase large subunit RRM1, controlling the endogenous dNTP pool and ensuring normal cell cycle progression. In vitro does not exhibit any S-adenosyl-L-homocysteine hydrolase activity. The chain is S-adenosylhomocysteine hydrolase-like protein 1 from Homo sapiens (Human).